The following is a 636-amino-acid chain: 1-deoxy-D-xylulose-5-phosphate synthase (636 aa).

Thiamine diphosphate contacts are provided by residues histidine 84 and 125 to 127; that span reads GHS. Mg(2+) is bound at residue aspartate 156. Thiamine diphosphate is bound by residues 157–158, asparagine 185, phenylalanine 292, and glutamate 375; that span reads GA. Asparagine 185 contacts Mg(2+).

It belongs to the transketolase family. DXPS subfamily. Homodimer. Requires Mg(2+) as cofactor. It depends on thiamine diphosphate as a cofactor.

It catalyses the reaction D-glyceraldehyde 3-phosphate + pyruvate + H(+) = 1-deoxy-D-xylulose 5-phosphate + CO2. It functions in the pathway metabolic intermediate biosynthesis; 1-deoxy-D-xylulose 5-phosphate biosynthesis; 1-deoxy-D-xylulose 5-phosphate from D-glyceraldehyde 3-phosphate and pyruvate: step 1/1. Its function is as follows. Catalyzes the acyloin condensation reaction between C atoms 2 and 3 of pyruvate and glyceraldehyde 3-phosphate to yield 1-deoxy-D-xylulose-5-phosphate (DXP). The protein is 1-deoxy-D-xylulose-5-phosphate synthase of Cellvibrio japonicus (strain Ueda107) (Pseudomonas fluorescens subsp. cellulosa).